Consider the following 268-residue polypeptide: Type III pantothenate kinase 1 (268 aa).

Residue 6 to 13 (DIGNTNIT) coordinates ATP. Residues tyrosine 100 and 107-110 (GTDR) each bind substrate. Aspartate 109 (proton acceptor) is an active-site residue. Aspartate 133 provides a ligand contact to K(+). Threonine 136 lines the ATP pocket.

The protein belongs to the type III pantothenate kinase family. In terms of assembly, homodimer. NH4(+) serves as cofactor. K(+) is required as a cofactor.

It is found in the cytoplasm. The catalysed reaction is (R)-pantothenate + ATP = (R)-4'-phosphopantothenate + ADP + H(+). It participates in cofactor biosynthesis; coenzyme A biosynthesis; CoA from (R)-pantothenate: step 1/5. Its function is as follows. Catalyzes the phosphorylation of pantothenate (Pan), the first step in CoA biosynthesis. This Symbiobacterium thermophilum (strain DSM 24528 / JCM 14929 / IAM 14863 / T) protein is Type III pantothenate kinase 1.